We begin with the raw amino-acid sequence, 472 residues long: MKYTSTRGGLIGVDFEGVLFSGFAPDGGLFMPEDIPKVDKRTLQTWSSYSYIQLVKEICSLFISPESIPRADLEGLIDRAFIRFRHRDIVPITRLKSGLNVMEMWHGVTHAFKDLAMSCVGELLDYFLKRKNKHVTILVATSGDTGSSAIESVRRRENMDIIVLLPHGRCTKIQELQMTTVIEDNVHVFSVDGTSDELDYPIKRLFADSDFVKKHNIMSTNSVNWARILVQIAHFFYGYMQCAPLTELTPVEIIVPTGGAGNITAGCIAQAMGLPIHLVAVVNRNDIVHRTVQYGDFSLGDTKATLASAMDIQEPYNMERILWLLAGSEKSHIKEMMKEFQEKKRVKLPEQLHKKIAGAMTSCVVTDENILGTIGRCWEENHYLLCPHSAVAVYYHYQQMDSNDKSPRCCLAPASAAKFQDVIIKANLTPDIPQEIKDLEKKKTRSHHLTKEDDWEKVLRQTIESISQRKVQ.

Lys113 is subject to N6-(pyridoxal phosphate)lysine.

Belongs to the threonine synthase family. It depends on pyridoxal 5'-phosphate as a cofactor.

In terms of biological role, acts as a catabolic phospho-lyase on both gamma- and beta-phosphorylated substrates. Degrades O-phospho-threonine (PThr) to alpha-ketobutyrate, ammonia and phosphate. This Xenopus laevis (African clawed frog) protein is Threonine synthase-like 2 (thnsl2).